The chain runs to 533 residues: Histone-arginine methyltransferase CARMER (533 aa).

The region spanning 143–452 is the SAM-dependent MTase PRMT-type domain; it reads ASQYFQFYGY…QSYDVTIDLH (310 aa). Residues Gln-156, Arg-165, Gly-189, Glu-211, Glu-240, and Thr-268 each coordinate S-adenosyl-L-methionine. Arg-503 carries the asymmetric dimethylarginine; by autocatalysis modification.

This sequence belongs to the class I-like SAM-binding methyltransferase superfamily. Protein arginine N-methyltransferase family. Homodimer. Post-translationally, the dimethylated protein is the major form.

The protein localises to the cytoplasm. It is found in the nucleus. The enzyme catalyses L-arginyl-[protein] + 2 S-adenosyl-L-methionine = N(omega),N(omega)-dimethyl-L-arginyl-[protein] + 2 S-adenosyl-L-homocysteine + 2 H(+). Its function is as follows. Methylates (mono- and asymmetric dimethylation) the guanidino nitrogens of arginyl residues in proteins. May methylate histone H3 at 'Arg-17' and activate transcription via chromatin remodeling. This chain is Histone-arginine methyltransferase CARMER (Art4), found in Drosophila willistoni (Fruit fly).